The primary structure comprises 217 residues: Protein GrpE (217 aa).

It belongs to the GrpE family. In terms of assembly, homodimer.

Its subcellular location is the cytoplasm. Functionally, participates actively in the response to hyperosmotic and heat shock by preventing the aggregation of stress-denatured proteins, in association with DnaK and GrpE. It is the nucleotide exchange factor for DnaK and may function as a thermosensor. Unfolded proteins bind initially to DnaJ; upon interaction with the DnaJ-bound protein, DnaK hydrolyzes its bound ATP, resulting in the formation of a stable complex. GrpE releases ADP from DnaK; ATP binding to DnaK triggers the release of the substrate protein, thus completing the reaction cycle. Several rounds of ATP-dependent interactions between DnaJ, DnaK and GrpE are required for fully efficient folding. This chain is Protein GrpE, found in Mycoplasma pneumoniae (strain ATCC 29342 / M129 / Subtype 1) (Mycoplasmoides pneumoniae).